The following is a 328-amino-acid chain: Putative UDP-N-acetylglucosamine--dolichyl-phosphate N-acetylglucosaminephosphotransferase (328 aa).

9 helical membrane-spanning segments follow: residues 1–21 (MLVSLLGILLSVIVGFVVTLI), 48–68 (VPVLGGIGIVAGFVAGSFTFL), 78–98 (IENVVVSILLSSLIIGFLGLL), 107–127 (ATRAFLPIFASIPLILYSVGH), 129–149 (IISIPFLGKVNFGILFYIIIL), 166–186 (LNGLGAGMGLIMALALAYIGL), 192–212 (SFYAGIVSIILASVLFGFLIF), 228–248 (FIGSVIGSIGISGYMYTALFF), and 301–321 (YHIVLIIWGIEILFAILAVVF).

It belongs to the glycosyltransferase 4 family.

It is found in the cell membrane. It carries out the reaction a di-trans,poly-cis-dolichyl phosphate + UDP-N-acetyl-alpha-D-glucosamine = an N-acetyl-alpha-D-glucosaminyl-diphospho-di-trans,poly-cis-dolichol + UMP. Inhibited by tunicamycin. The protein is Putative UDP-N-acetylglucosamine--dolichyl-phosphate N-acetylglucosaminephosphotransferase (gnpTA) of Sulfolobus acidocaldarius (strain ATCC 33909 / DSM 639 / JCM 8929 / NBRC 15157 / NCIMB 11770).